The primary structure comprises 958 residues: Protein translocase subunit SecA (958 aa).

Residues glutamine 87, 105–109, and aspartate 524 contribute to the ATP site; that span reads GEGKT. The segment at 598-617 is disordered; that stretch reads RRIDNQLRGRSGRQGDPGRS. Zn(2+) is bound by residues cysteine 939, cysteine 941, cysteine 950, and histidine 951.

This sequence belongs to the SecA family. As to quaternary structure, monomer and homodimer. Part of the essential Sec protein translocation apparatus which comprises SecA, SecYEG and auxiliary proteins SecDF-YajC and YidC. Zn(2+) is required as a cofactor.

It is found in the cell inner membrane. The protein resides in the cytoplasm. The catalysed reaction is ATP + H2O + cellular proteinSide 1 = ADP + phosphate + cellular proteinSide 2.. Its function is as follows. Part of the Sec protein translocase complex. Interacts with the SecYEG preprotein conducting channel. Has a central role in coupling the hydrolysis of ATP to the transfer of proteins into and across the cell membrane, serving both as a receptor for the preprotein-SecB complex and as an ATP-driven molecular motor driving the stepwise translocation of polypeptide chains across the membrane. This is Protein translocase subunit SecA from Methylobacterium sp. (strain 4-46).